The sequence spans 787 residues: LPS-assembly protein LptD (787 aa).

An N-terminal signal peptide occupies residues 1-39; it reads MPRKTLLPLVPACDAAPRRKRLAAALLAVPGLVPAVSQA.

This sequence belongs to the LptD family. In terms of assembly, component of the lipopolysaccharide transport and assembly complex. Interacts with LptE and LptA.

The protein localises to the cell outer membrane. Functionally, together with LptE, is involved in the assembly of lipopolysaccharide (LPS) at the surface of the outer membrane. The chain is LPS-assembly protein LptD from Burkholderia thailandensis (strain ATCC 700388 / DSM 13276 / CCUG 48851 / CIP 106301 / E264).